The chain runs to 403 residues: uncharacterized protein (403 aa).

The Bro-N domain occupies 3 to 126; sequence QVKIGQFKFG…EVIPQVLCTG (124 aa).

This is an uncharacterized protein from Lepidoptera (butterflies and moths).